Here is an 867-residue protein sequence, read N- to C-terminus: Heat shock 70 kDa protein 17 (867 aa).

An N-terminal signal peptide occupies residues 1 to 24; the sequence is MGKIFSWLVVLLSLISLVPVPSES. 2 stretches are compositionally biased toward polar residues: residues 560 to 575 and 587 to 598; these read TIDS…ATDE and DAENSTASNTTA. 2 disordered regions span residues 560-607 and 829-867; these read TIDS…ASLG and PKPK…HDEL. Residues 833–867 are compositionally biased toward basic and acidic residues; it reads PKIEKVTKTENTTKEEEQSKSSDEAAKEEESHDEL. Residues 865–867 carry the Prevents secretion from ER motif; that stretch reads DEL.

This sequence belongs to the heat shock protein 70 (TC 1.A.33) family. HSP110/SSE subfamily.

The protein resides in the endoplasmic reticulum lumen. The protein is Heat shock 70 kDa protein 17 (HSP70-17) of Arabidopsis thaliana (Mouse-ear cress).